The primary structure comprises 389 residues: 5-hydroxytryptamine receptor 1B (389 aa).

Positions 1–27 (MEDAGTPCAPPPPAGSQTGAPPANLSS) are disordered. Topologically, residues 1–45 (MEDAGTPCAPPPPAGSQTGAPPANLSSAPHNCSAEGYIYQDSIAL) are extracellular. Residues 15-27 (GSQTGAPPANLSS) are compositionally biased toward polar residues. Residues N24 and N31 are each glycosylated (N-linked (GlcNAc...) asparagine). The helical transmembrane segment at 46–71 (PWKVLLAILLALLTLATTLSNAFVIA) threads the bilayer. At 72–85 (TVYRTRKLHTPANY) the chain is on the cytoplasmic side. Residues 86–110 (LIASLAVTDLLVSILVMPISTMYAV) form a helical membrane-spanning segment. At 111-118 (TGRWTLGQ) the chain is on the extracellular side. Residues 119–144 (VVCDLWLSSDITCCTASILHLCVIAL) form a helical membrane-spanning segment. C121 and C198 are joined by a disulfide. Residues D128 and T133 each contribute to the ergotamine site. The DRY motif; important for ligand-induced conformation changes and signaling motif lies at 145–147 (DRY). Residues 145 to 164 (DRYWAITDAVEYSAKRTPKR) are Cytoplasmic-facing. A helical membrane pass occupies residues 165–183 (AAVMIALVWVFSISISLPP). Residues 184-204 (FFWRQAKAEEEVSDCVVNTDH) lie on the Extracellular side of the membrane. V200 lines the ergotamine pocket. A helical membrane pass occupies residues 205–228 (ILYTVYSTVGAFYFPTLLLIALYG). At 229–314 (RIYVEARSRI…AARERKATKT (86 aa)) the chain is on the cytoplasmic side. Residues 258–271 (DSPGSTSSVTSVNS) are compositionally biased toward polar residues. The interval 258-281 (DSPGSTSSVTSVNSRAPDVPSESG) is disordered. A helical transmembrane segment spans residues 315–336 (LGIILGAFIVCWLPFFIISLVM). Residues 337-346 (PICKDACWFH) are Extracellular-facing. A helical transmembrane segment spans residues 347–369 (LAIFDFFTWLGYLNSLINPIIYT). The NPxxY motif; important for ligand-induced conformation changes and signaling motif lies at 364 to 368 (NPIIY). Residues 370–389 (MSNEDFKQAFHKLIRFKCAS) are Cytoplasmic-facing. Residue C387 is the site of S-palmitoyl cysteine attachment.

This sequence belongs to the G-protein coupled receptor 1 family. In terms of assembly, homodimer. Heterodimer with HTR1D. Phosphorylated. Desensitization of the receptor may be mediated by its phosphorylation. In terms of processing, palmitoylated.

The protein localises to the cell membrane. Its function is as follows. G-protein coupled receptor for 5-hydroxytryptamine (serotonin). Also functions as a receptor for ergot alkaloid derivatives, various anxiolytic and antidepressant drugs and other psychoactive substances, such as lysergic acid diethylamide (LSD). Ligand binding causes a conformation change that triggers signaling via guanine nucleotide-binding proteins (G proteins) and modulates the activity of downstream effectors, such as adenylate cyclase. HTR1B is coupled to G(i)/G(o) G alpha proteins and mediates inhibitory neurotransmission by inhibiting adenylate cyclase activity. Arrestin family members inhibit signaling via G proteins and mediate activation of alternative signaling pathways. Regulates the release of 5-hydroxytryptamine, dopamine and acetylcholine in the brain, and thereby affects neural activity, nociceptive processing, pain perception, mood and behavior. Besides, plays a role in vasoconstriction of cerebral arteries. This Vulpes vulpes (Red fox) protein is 5-hydroxytryptamine receptor 1B (HTR1B).